The following is a 310-amino-acid chain: MKIVACNSNRPLAEAVAAALNLPLTKASVRRFADMEVFVEIHENVRGEDVFVIQSTSYPANDNLMELLITLDALRRGSARRVTAVIPYFGYARQDRKSGPRTPISAKLVANLITEAGANRVLTMDLHAGQIQGFFDIPVDNLYAAPLFARDIAERFHGRDIMIVSPDVGGVLRARAIATRLNTDLAIIDKRRERAGVSEVMNVIGDVEGRDCILIDDICDSGGTLCNAAAALIANGAASASVYTTHGVLSGGAVARIASSPISMMTITDSILATEAVRLAQNVRQLTIAPLLAEAMRRISDESSVSSLFD.

ATP-binding positions include 34–36 (DME) and 93–94 (RQ). H127 and D167 together coordinate Mg(2+). K190 is an active-site residue. Residues R192, D216, and 220–224 (DSGGT) contribute to the D-ribose 5-phosphate site.

Belongs to the ribose-phosphate pyrophosphokinase family. Class I subfamily. As to quaternary structure, homohexamer. Requires Mg(2+) as cofactor.

The protein resides in the cytoplasm. It catalyses the reaction D-ribose 5-phosphate + ATP = 5-phospho-alpha-D-ribose 1-diphosphate + AMP + H(+). It functions in the pathway metabolic intermediate biosynthesis; 5-phospho-alpha-D-ribose 1-diphosphate biosynthesis; 5-phospho-alpha-D-ribose 1-diphosphate from D-ribose 5-phosphate (route I): step 1/1. In terms of biological role, involved in the biosynthesis of the central metabolite phospho-alpha-D-ribosyl-1-pyrophosphate (PRPP) via the transfer of pyrophosphoryl group from ATP to 1-hydroxyl of ribose-5-phosphate (Rib-5-P). The polypeptide is Ribose-phosphate pyrophosphokinase (Granulibacter bethesdensis (strain ATCC BAA-1260 / CGDNIH1)).